A 157-amino-acid polypeptide reads, in one-letter code: Peptide methionine sulfoxide reductase MsrA (157 aa).

Residue Cys-10 is part of the active site.

It belongs to the MsrA Met sulfoxide reductase family.

The catalysed reaction is L-methionyl-[protein] + [thioredoxin]-disulfide + H2O = L-methionyl-(S)-S-oxide-[protein] + [thioredoxin]-dithiol. It catalyses the reaction [thioredoxin]-disulfide + L-methionine + H2O = L-methionine (S)-S-oxide + [thioredoxin]-dithiol. Has an important function as a repair enzyme for proteins that have been inactivated by oxidation. Catalyzes the reversible oxidation-reduction of methionine sulfoxide in proteins to methionine. In Clostridium botulinum (strain Okra / Type B1), this protein is Peptide methionine sulfoxide reductase MsrA.